We begin with the raw amino-acid sequence, 482 residues long: UDP-N-acetylmuramate--L-alanine ligase (482 aa).

123 to 129 (GTHGKTT) lines the ATP pocket.

The protein belongs to the MurCDEF family.

Its subcellular location is the cytoplasm. The catalysed reaction is UDP-N-acetyl-alpha-D-muramate + L-alanine + ATP = UDP-N-acetyl-alpha-D-muramoyl-L-alanine + ADP + phosphate + H(+). It functions in the pathway cell wall biogenesis; peptidoglycan biosynthesis. Functionally, cell wall formation. This chain is UDP-N-acetylmuramate--L-alanine ligase, found in Pseudomonas putida (strain ATCC 700007 / DSM 6899 / JCM 31910 / BCRC 17059 / LMG 24140 / F1).